The chain runs to 127 residues: Protein LLP homolog (127 aa).

The segment covering 1–21 (MAKSLRSKWKRKMRAEKRKKN) has biased composition (basic residues). The segment at 1–24 (MAKSLRSKWKRKMRAEKRKKNAPK) is disordered. Glycyl lysine isopeptide (Lys-Gly) (interchain with G-Cter in SUMO2) cross-links involve residues Lys-65 and Lys-72. The segment covering 98 to 120 (RQRKRLKAKRERKKGKSKVKAMK) has biased composition (basic residues). Residues 98–127 (RQRKRLKAKRERKKGKSKVKAMKAAKGLTW) form a disordered region.

It belongs to the learning-associated protein family. In terms of assembly, interacts with CTCF, MYO1C and with the transcriptional machinery, including RNA polymerase II and TBP.

It is found in the nucleus. The protein localises to the nucleolus. Its subcellular location is the chromosome. Its function is as follows. In hippocampal neurons, regulates dendritic and spine growth and synaptic transmission. This Bos taurus (Bovine) protein is Protein LLP homolog (LLPH).